The chain runs to 528 residues: GMP synthase [glutamine-hydrolyzing] (528 aa).

Residues Ala-13 to Asp-204 form the Glutamine amidotransferase type-1 domain. The Nucleophile role is filled by Cys-90. Catalysis depends on residues His-178 and Glu-180. Residues Trp-205 to Arg-403 enclose the GMPS ATP-PPase domain. Ser-232–Ser-238 contacts ATP.

In terms of assembly, homodimer.

It carries out the reaction XMP + L-glutamine + ATP + H2O = GMP + L-glutamate + AMP + diphosphate + 2 H(+). It functions in the pathway purine metabolism; GMP biosynthesis; GMP from XMP (L-Gln route): step 1/1. Its function is as follows. Catalyzes the synthesis of GMP from XMP. This Prochlorococcus marinus (strain NATL1A) protein is GMP synthase [glutamine-hydrolyzing].